Reading from the N-terminus, the 426-residue chain is Glutamyl-tRNA reductase (426 aa).

Residues 51–54 (TCNR), Ser-110, 115–117 (EAQ), and Gln-121 each bind substrate. Cys-52 (nucleophile) is an active-site residue. 190-195 (GAGEMA) contributes to the NADP(+) binding site.

Belongs to the glutamyl-tRNA reductase family. Homodimer.

It catalyses the reaction (S)-4-amino-5-oxopentanoate + tRNA(Glu) + NADP(+) = L-glutamyl-tRNA(Glu) + NADPH + H(+). It functions in the pathway porphyrin-containing compound metabolism; protoporphyrin-IX biosynthesis; 5-aminolevulinate from L-glutamyl-tRNA(Glu): step 1/2. Its function is as follows. Catalyzes the NADPH-dependent reduction of glutamyl-tRNA(Glu) to glutamate 1-semialdehyde (GSA). This chain is Glutamyl-tRNA reductase, found in Desulfotalea psychrophila (strain LSv54 / DSM 12343).